The primary structure comprises 198 residues: HTH-type transcriptional regulator BetI (198 aa).

An HTH tetR-type domain is found at 8–68; that stretch reads PLRRRELIDA…ATMRHLLREL (61 aa). The H-T-H motif DNA-binding region spans 31-50; sequence TVAQIAHEAGVSPALAHHYF.

The protein operates within amine and polyamine biosynthesis; betaine biosynthesis via choline pathway [regulation]. Repressor involved in the biosynthesis of the osmoprotectant glycine betaine. It represses transcription of the choline transporter BetT and the genes of BetAB involved in the synthesis of glycine betaine. The protein is HTH-type transcriptional regulator BetI of Brucella suis biovar 1 (strain 1330).